A 238-amino-acid polypeptide reads, in one-letter code: Pyridoxine 5'-phosphate synthase (238 aa).

Residue Asn7 participates in 3-amino-2-oxopropyl phosphate binding. Residue 9–10 (DH) participates in 1-deoxy-D-xylulose 5-phosphate binding. Position 18 (Arg18) interacts with 3-amino-2-oxopropyl phosphate. The active-site Proton acceptor is His43. Residues Arg45 and His50 each contribute to the 1-deoxy-D-xylulose 5-phosphate site. Residue Glu70 is the Proton acceptor of the active site. Thr100 is a binding site for 1-deoxy-D-xylulose 5-phosphate. Residue His190 is the Proton donor of the active site. 3-amino-2-oxopropyl phosphate is bound by residues Gly191 and 212–213 (GH).

This sequence belongs to the PNP synthase family. In terms of assembly, homooctamer; tetramer of dimers.

The protein localises to the cytoplasm. It catalyses the reaction 3-amino-2-oxopropyl phosphate + 1-deoxy-D-xylulose 5-phosphate = pyridoxine 5'-phosphate + phosphate + 2 H2O + H(+). It participates in cofactor biosynthesis; pyridoxine 5'-phosphate biosynthesis; pyridoxine 5'-phosphate from D-erythrose 4-phosphate: step 5/5. Functionally, catalyzes the complicated ring closure reaction between the two acyclic compounds 1-deoxy-D-xylulose-5-phosphate (DXP) and 3-amino-2-oxopropyl phosphate (1-amino-acetone-3-phosphate or AAP) to form pyridoxine 5'-phosphate (PNP) and inorganic phosphate. This is Pyridoxine 5'-phosphate synthase from Prochlorococcus marinus (strain AS9601).